The sequence spans 282 residues: Pantothenate synthetase (282 aa).

ATP is bound at residue 30–37 (MGFLHDGH). Catalysis depends on H37, which acts as the Proton donor. A (R)-pantoate-binding site is contributed by Q60. Q60 provides a ligand contact to beta-alanine. 146 to 149 (GQKD) provides a ligand contact to ATP. Q152 contributes to the (R)-pantoate binding site. ATP contacts are provided by residues I175 and 183–186 (KSSR).

It belongs to the pantothenate synthetase family. In terms of assembly, homodimer.

The protein resides in the cytoplasm. The catalysed reaction is (R)-pantoate + beta-alanine + ATP = (R)-pantothenate + AMP + diphosphate + H(+). It functions in the pathway cofactor biosynthesis; (R)-pantothenate biosynthesis; (R)-pantothenate from (R)-pantoate and beta-alanine: step 1/1. Catalyzes the condensation of pantoate with beta-alanine in an ATP-dependent reaction via a pantoyl-adenylate intermediate. The chain is Pantothenate synthetase from Campylobacter jejuni subsp. doylei (strain ATCC BAA-1458 / RM4099 / 269.97).